The primary structure comprises 75 residues: MRNKIPYDSKKILYDSELLLNSASNRYILTMKVANRANLRRYEEFETMNHSSIKPIARTIIEMVDDKNFLVVKKK.

This sequence belongs to the RNA polymerase subunit omega family.

It localises to the plastid. Its subcellular location is the chloroplast. The catalysed reaction is RNA(n) + a ribonucleoside 5'-triphosphate = RNA(n+1) + diphosphate. In terms of biological role, may be involved in RNA polymerase activity. In Mesostigma viride (Green alga), this protein is Putative DNA-directed RNA polymerase subunit omega (rpoZ).